The following is a 230-amino-acid chain: MTIALDTLGLIRLMTWLSPAFPVGGFAYSGGLEKAVEDGLIDGGGTATGRQEALLAWLTSLLDHGTIWNDAVLLAEAWRVWNVPQSLTEVSDLALALAGSRERYQETTALGAAFREAARAWADPLSALSPNPVAYPVAVGAVGASQGIGCEAVLAAYLHAALSQQVSAGIRLSLIGQTGGLAILSRLEAPVARLAARAVQTGLDDLGSATIAADIVSARHEGQSVRLFRS.

It belongs to the UreF family. In terms of assembly, ureD, UreF and UreG form a complex that acts as a GTP-hydrolysis-dependent molecular chaperone, activating the urease apoprotein by helping to assemble the nickel containing metallocenter of UreC. The UreE protein probably delivers the nickel.

It is found in the cytoplasm. Its function is as follows. Required for maturation of urease via the functional incorporation of the urease nickel metallocenter. The protein is Urease accessory protein UreF of Allorhizobium ampelinum (strain ATCC BAA-846 / DSM 112012 / S4) (Agrobacterium vitis (strain S4)).